A 360-amino-acid polypeptide reads, in one-letter code: Tryptophan--tRNA ligase, mitochondrial (360 aa).

Residues Gln-38 and 44–47 (HLGN) contribute to the ATP site. Positions 39 to 47 (PTGIPHLGN) match the 'HIGH' region motif. Asp-168 lines the L-tryptophan pocket. Residues 180–182 (GED) and 229–233 (KMSKS) contribute to the ATP site. The segment covering 220–230 (IRSLREPEKKM) has biased composition (basic and acidic residues). The segment at 220-241 (IRSLREPEKKMSKSSGGPRSRI) is disordered. The short motif at 229–233 (KMSKS) is the 'KMSKS' region element.

It belongs to the class-I aminoacyl-tRNA synthetase family.

It localises to the mitochondrion matrix. It catalyses the reaction tRNA(Trp) + L-tryptophan + ATP = L-tryptophyl-tRNA(Trp) + AMP + diphosphate + H(+). Catalyzes the attachment of tryptophan to tRNA(Trp). The protein is Tryptophan--tRNA ligase, mitochondrial of Caenorhabditis elegans.